The sequence spans 646 residues: Type I inositol polyphosphate 5-phosphatase 2 (646 aa).

A compositionally biased stretch (basic and acidic residues) spans 59–74 (TDEDSHNGRRGSEADH). 3 disordered regions span residues 59-99 (TDED…GKSE), 185-207 (ESVYDQSPSCNNNALHRSHSAPS), and 329-369 (IDNR…IRNS). Polar residues predominate over residues 188–207 (YDQSPSCNNNALHRSHSAPS). The span at 341 to 350 (EAAKIMHDDS) shows a compositional bias: basic and acidic residues. Catalytic stretches follow at residues 495-510 (DQVFWFGDLNYRLNMS) and 575-590 (KKRAPAWCDRILWLGK).

Belongs to the inositol polyphosphate 5-phosphatase family. As to expression, expressed ubiquitously.

The enzyme catalyses 1D-myo-inositol 1,4,5-trisphosphate + H2O = 1D-myo-inositol 1,4-bisphosphate + phosphate. It carries out the reaction 1D-myo-inositol 1,3,4,5-tetrakisphosphate + H2O = 1D-myo-inositol 1,3,4-trisphosphate + phosphate. In terms of biological role, has phosphatase activity toward Ins(1,4,5)P3 and Ins(1,3,4,5)P4. Seems to be involved in the abscisic acid (ABA) signaling pathway. Could also be able to hydrolyze PtdIns(4,5)P2 and PtdIns(3,4,5)P3. In Arabidopsis thaliana (Mouse-ear cress), this protein is Type I inositol polyphosphate 5-phosphatase 2.